The sequence spans 751 residues: Diamine oxidase [copper-containing] (751 aa).

An N-terminal signal peptide occupies residues 1–19; that stretch reads MPALGWAVAAILMLQTAMA. 2 N-linked (GlcNAc...) asparagine glycosylation sites follow: asparagine 110 and asparagine 168. Cysteine 177 and cysteine 181 are oxidised to a cystine. Catalysis depends on aspartate 373, which acts as the Proton acceptor. An intrachain disulfide couples cysteine 391 to cysteine 417. Tyrosine 461 acts as the Schiff-base intermediate with substrate; via topaquinone in catalysis. Tyrosine 461 is modified (2',4',5'-topaquinone). Cu(2+)-binding residues include histidine 510 and histidine 512. The Ca(2+) site is built by aspartate 519, leucine 520, and aspartate 521. N-linked (GlcNAc...) asparagine glycosylation occurs at asparagine 538. The Ca(2+) site is built by glutamate 562, phenylalanine 653, asparagine 656, glutamate 658, aspartate 664, and leucine 665. Histidine 675 serves as a coordination point for Cu(2+). Asparagine 745 is a glycosylation site (N-linked (GlcNAc...) asparagine).

The protein belongs to the copper/topaquinone oxidase family. Homodimer; disulfide-linked. Cu(2+) serves as cofactor. Requires Ca(2+) as cofactor. The cofactor is L-topaquinone. Post-translationally, N-glycosylated. In terms of processing, topaquinone (TPQ) is generated by copper-dependent autoxidation of a specific tyrosyl residue. Widely expressed with higher expression in placenta and kidney.

It localises to the secreted. The protein localises to the extracellular space. It is found in the cell membrane. The enzyme catalyses histamine + O2 + H2O = imidazole-4-acetaldehyde + H2O2 + NH4(+). It carries out the reaction N(tau)-methylhistamine + O2 + H2O = 1-methylimidazole-4-acetaldehyde + H2O2 + NH4(+). The catalysed reaction is putrescine + O2 + H2O = 4-aminobutanal + H2O2 + NH4(+). It catalyses the reaction cadaverine + O2 + H2O = 5-aminopentanal + H2O2 + NH4(+). With respect to regulation, inhibited by amiloride and amiloride analogs. Inhibited by isoniazid, cimetidine, clonidine, berenil and pentamidine. In terms of biological role, catalyzes the oxidative deamination of primary amines to the corresponding aldehydes with the concomitant production of hydrogen peroxide and ammonia. Its preferred substrates are the diamines histamine and 1-methylhistamine and it could therefore play a role in allergic and immune responses. Has a broad specificity for diamines and can also act on cadaverine and putrescine, two products of amino acid catabolism. It could also act on polyamines, like spermidine and spermine though less efficiently, and regulate various biological processes. The chain is Diamine oxidase [copper-containing] from Homo sapiens (Human).